A 163-amino-acid chain; its full sequence is HTH-type transcriptional regulator IscR (163 aa).

An HTH rrf2-type domain is found at 2–131 (RLTSKGRYAV…NNITLGELVN (130 aa)). The H-T-H motif DNA-binding region spans 28–51 (LADISERQGISLSYLEQLFSRLRK). Residues Cys92, Cys98, and Cys104 each coordinate [2Fe-2S] cluster.

It depends on [2Fe-2S] cluster as a cofactor.

Regulates the transcription of several operons and genes involved in the biogenesis of Fe-S clusters and Fe-S-containing proteins. The protein is HTH-type transcriptional regulator IscR of Klebsiella pneumoniae (strain 342).